Here is a 70-residue protein sequence, read N- to C-terminus: Small ribosomal subunit protein bS21 (70 aa).

The tract at residues 43–70 (TERKRKAAAAVKRQHKRLRSLTLPPKLY) is disordered. Basic residues predominate over residues 45–61 (RKRKAAAAVKRQHKRLR).

This sequence belongs to the bacterial ribosomal protein bS21 family.

This Dechloromonas aromatica (strain RCB) protein is Small ribosomal subunit protein bS21.